The following is a 513-amino-acid chain: MEMAKEQEMILVLDFGSQYNQLITRRIREMGVYSELHDHEISIEEIKKMNPKGIILSGGPNSVYEEGSYTIDPEIYNLGVPVLGICYGMQLTTKLLGGKVERANEREYGKAIIHAKADELFFGLPEEQTVWMSHSDKVIEIPEGFESIADSPSTPYAAIEDKERRIYGVQFHPEVRHTEYGNDILRNFVRRICDCTGEWTMENFIDLEIEKIREQVGDRKVLCAMSGGVDSSVVAVLLHKAIGDQLTCIFVDHGLLRKGEGDMVMEQFGEGFNMNIIRVNAKDRFMDKLKGVSDPEQKRKIIGNEFVYVFDDEASKLEGVDFLAQGTLYTDVIESGTKTAQTIKSHHNVGGLPEDMQFELIEPINTLFKDEVRALGIELGIPEHLVWRQPFPGPGLGIRVLGEITEEKLEIVRESDAILREVIREEGLEREIWQYFTVLPGMRSVGVMGDYRTYDYTIGIRAVTSIDGMTSDFARIDWEVLQKISSRIVNEVDHVNRVVYDVTSKPPSTIEWE.

The region spanning 9–198 (MILVLDFGSQ…VRRICDCTGE (190 aa)) is the Glutamine amidotransferase type-1 domain. The active-site Nucleophile is Cys-86. Residues His-172 and Glu-174 contribute to the active site. In terms of domain architecture, GMPS ATP-PPase spans 199–388 (WTMENFIDLE…LGIPEHLVWR (190 aa)). Residue 226–232 (SGGVDSS) coordinates ATP.

As to quaternary structure, homodimer.

It carries out the reaction XMP + L-glutamine + ATP + H2O = GMP + L-glutamate + AMP + diphosphate + 2 H(+). Its pathway is purine metabolism; GMP biosynthesis; GMP from XMP (L-Gln route): step 1/1. Its function is as follows. Catalyzes the synthesis of GMP from XMP. The sequence is that of GMP synthase [glutamine-hydrolyzing] from Staphylococcus carnosus (strain TM300).